The primary structure comprises 206 residues: Superoxide dismutase [Mn] (206 aa).

His-27, His-82, Asp-168, and His-172 together coordinate Mn(2+).

The protein belongs to the iron/manganese superoxide dismutase family. Homodimer. The cofactor is Mn(2+).

It catalyses the reaction 2 superoxide + 2 H(+) = H2O2 + O2. Destroys superoxide anion radicals which are normally produced within the cells and which are toxic to biological systems. This chain is Superoxide dismutase [Mn] (sodA), found in Escherichia coli (strain K12).